Consider the following 438-residue polypeptide: MEYNVEDLSPVKKKITITVPVEEVNAALAATIAVYQTSVNLSGFRKGKVPASIIEGRFRKEVYNEATQDLVNVHINEVVGSLDTQPASRIDFDGGQLERDKEFVYTISFEVMPVFEMPDYDGMEVEQEKPEVDENEVNAVLERIRTNLADVVTVAEHRPAKDGEIAVLDFAAYENGEPIAGVAADNFELNLGGNQALVDFEELVKRAVPGEATEGDVTFPEDFINPEFAGKTVTMKVTVHAVKERKLPELDDELAKKAGGFESFDKMRETVEQSYLESRTQLCKAQAQKTMVDSLLKTLDFPVPESMLEMYMDSLLAEKKDRLERQGKSLESLGKSPEELRDEVRPEAEHIARTQIFLVKAAQKEGVTVSEQEVDRQLQQIAMRSGQDFQTMKEHYTRTNMIFNLRDRMLADKAMEAIYEKAAIKEVPAKKEAAEAAE.

The 86-residue stretch at 163–248 folds into the PPIase FKBP-type domain; the sequence is GEIAVLDFAA…VHAVKERKLP (86 aa).

This sequence belongs to the FKBP-type PPIase family. Tig subfamily.

It localises to the cytoplasm. The catalysed reaction is [protein]-peptidylproline (omega=180) = [protein]-peptidylproline (omega=0). Functionally, involved in protein export. Acts as a chaperone by maintaining the newly synthesized protein in an open conformation. Functions as a peptidyl-prolyl cis-trans isomerase. The protein is Trigger factor of Oleidesulfovibrio alaskensis (strain ATCC BAA-1058 / DSM 17464 / G20) (Desulfovibrio alaskensis).